A 291-amino-acid polypeptide reads, in one-letter code: uncharacterized protein (291 aa).

A run of 2 helical transmembrane segments spans residues 42–62 and 86–106; these read IFFF…RALW and TIFP…LALD.

Belongs to the cytochrome c oxidase subunit 2 family.

The protein localises to the mitochondrion membrane. This is an uncharacterized protein from Arabidopsis thaliana (Mouse-ear cress).